Consider the following 299-residue polypeptide: MAQNLKDLAGRLPSGPRGMGTALKLLLGAGAVAYGIRESVFTVEGGHRAIFFNRIGGVQQDTILAEGLHFRIPWFQYPIIYDIRARPRKISSPTGSKDLQMVNISLRVLSRPNAMELPSMYQRLGLDYEERVLPSIVNEVLKSVVAKFNASQLITQRAQVSLLIRRELTERAKDFSLILDDVAITELSFSREYTAAVEAKQVAQQEAQRAQFLVEKAKQEQRQKIVQAEGEAEAARMLGEALSKNPGYIKLRKIRAAQNISKTIATSQNRIYLTADNLVLNLQDESFTRGSDSLIKGKK.

N-acetylalanine is present on alanine 2. Residues 19-49 (MGTALKLLLGAGAVAYGIRESVFTVEGGHRA) form a necessary for transcriptional repression region. Position 128 is a phosphotyrosine (tyrosine 128). Residue lysine 147 is modified to N6-acetyllysine. Residues 150–174 (ASQLITQRAQVSLLIRRELTERAKD) are necessary for transcriptional repression. Serine 151 carries the phosphoserine modification. The stretch at 190–238 (SREYTAAVEAKQVAQQEAQRAQFLVEKAKQEQRQKIVQAEGEAEAARML) forms a coiled coil. Lysine 200, lysine 250, and lysine 262 each carry N6-acetyllysine.

The protein belongs to the prohibitin family. In terms of assembly, the mitochondrial prohibitin complex consists of two subunits (PHB1 and PHB2), assembled into a membrane-associated ring-shaped supercomplex of approximately 1 mDa. Interacts with ESR1, HDAC1 and HDAC5. Interacts with ZNF703. Interacts with STOML2. Interacts with ARFGEF3. Interacts with SPHK2. Interacts with COX4I1; the interaction associates PHB2 with COX. Interacts with MAP1LC3B (membrane-bound form LC3-II); the interaction is direct and upon mitochondrial depolarization and proteasome-dependent outer membrane rupture. Interacts with IGFBP6 (via C-terminal domain). Interacts with CLPB. Interacts with CD86 (via cytoplasmic domain); the interactions increases after priming with CD40. Interacts with AFG3L2. Interacts with DNAJC19. Interacts with AKT2; this interaction may be important for myogenic differentiation. Post-translationally, phosphorylated. Tyrosine phosphorylation is indirectly stimulated by IGFBP6.

The protein resides in the mitochondrion inner membrane. The protein localises to the cytoplasm. It is found in the nucleus. It localises to the cell membrane. Its function is as follows. Protein with pleiotropic attributes mediated in a cell-compartment- and tissue-specific manner, which include the plasma membrane-associated cell signaling functions, mitochondrial chaperone, and transcriptional co-regulator of transcription factors and sex steroid hormones in the nucleus. In the mitochondria, together with PHB, forms large ring complexes (prohibitin complexes) in the inner mitochondrial membrane (IMM) and functions as a chaperone protein that stabilizes mitochondrial respiratory enzymes and maintains mitochondrial integrity in the IMM, which is required for mitochondrial morphogenesis, neuronal survival, and normal lifespan. The prohibitin complex, with DNAJC19, regulates cardiolipin remodeling and the protein turnover of OMA1 in a cardiolipin-binding manner. Also regulates cytochrome-c oxidase assembly (COX) and mitochondrial respiration. Binding to sphingoid 1-phosphate (SPP) modulates its regulator activity. Has a key role of mitophagy receptor involved in targeting mitochondria for autophagic degradation. Involved in mitochondrial-mediated antiviral innate immunity, activates RIG-I-mediated signal transduction and production of IFNB1 and pro-inflammatory cytokine IL6. Functionally, in the nucleus, serves as transcriptional co-regulator. Acts as a mediator of transcriptional repression by nuclear hormone receptors via recruitment of histone deacetylases. Functions as an estrogen receptor (ER)-selective coregulator that potentiates the inhibitory activities of antiestrogens and represses the activity of estrogens. Competes with NCOA1 for modulation of ER transcriptional activity. In terms of biological role, in the plasma membrane, is involved in IGFBP6-induced cell migration. Cooperates with CD86 to mediate CD86-signaling in B lymphocytes that regulates the level of IgG1 produced through the activation of distal signaling intermediates. Upon CD40 engagement, required to activate NF-kappa-B signaling pathway via phospholipase C and protein kinase C activation. The protein is Prohibitin-2 (PHB2) of Bos taurus (Bovine).